Reading from the N-terminus, the 115-residue chain is Gonadotropin subunit beta-2 (115 aa).

Intrachain disulfides connect cysteine 6/cysteine 54, cysteine 20/cysteine 69, cysteine 23/cysteine 107, cysteine 31/cysteine 85, cysteine 35/cysteine 87, and cysteine 90/cysteine 97. The N-linked (GlcNAc...) asparagine glycan is linked to asparagine 10.

Belongs to the glycoprotein hormones subunit beta family. As to quaternary structure, heterodimer of an alpha and a beta chain.

It is found in the secreted. Involved in gametogenesis and steroidogenesis. In Thunnus obesus (Bigeye tuna), this protein is Gonadotropin subunit beta-2 (cgbb).